The chain runs to 287 residues: MNKSIAPATSVVAGNVKFGNALPLSVIAGPCQLESRAHALEVASALKEIATRLGIGLVYKTSFDKANRTSAASARGLGLDAALPIFAEIRDHLGLPVLTDVHENEQCARAAEAVDILQIPAFLCRQTDLLLAAAATGRIVNVKKGQFLAPWDMGNVVSKITHAGNSKVLVTERGVSFGYNTLVSDMRALPIMAKTTGAPVIFDATHSVQQPGGKGTSSGGEREYVPVLARAAVAVGVAGVFIETHPDPDHAPSDGPNMVPLREFEALIKTLMEFDALAKKRSTVGAV.

The protein belongs to the KdsA family.

It is found in the cytoplasm. It catalyses the reaction D-arabinose 5-phosphate + phosphoenolpyruvate + H2O = 3-deoxy-alpha-D-manno-2-octulosonate-8-phosphate + phosphate. It functions in the pathway carbohydrate biosynthesis; 3-deoxy-D-manno-octulosonate biosynthesis; 3-deoxy-D-manno-octulosonate from D-ribulose 5-phosphate: step 2/3. Its pathway is bacterial outer membrane biogenesis; lipopolysaccharide biosynthesis. The chain is 2-dehydro-3-deoxyphosphooctonate aldolase from Rhodopseudomonas palustris (strain ATCC BAA-98 / CGA009).